The primary structure comprises 335 residues: Glycerol-3-phosphate dehydrogenase [NAD(P)+] (335 aa).

NADPH-binding residues include serine 10, phenylalanine 11, arginine 31, and lysine 105. Sn-glycerol 3-phosphate is bound by residues lysine 105, glycine 136, and serine 138. Alanine 140 is an NADPH binding site. Positions 191, 244, 254, 255, and 256 each coordinate sn-glycerol 3-phosphate. Lysine 191 (proton acceptor) is an active-site residue. Arginine 255 serves as a coordination point for NADPH. Positions 279 and 281 each coordinate NADPH.

It belongs to the NAD-dependent glycerol-3-phosphate dehydrogenase family.

The protein localises to the cytoplasm. It catalyses the reaction sn-glycerol 3-phosphate + NAD(+) = dihydroxyacetone phosphate + NADH + H(+). The catalysed reaction is sn-glycerol 3-phosphate + NADP(+) = dihydroxyacetone phosphate + NADPH + H(+). It functions in the pathway membrane lipid metabolism; glycerophospholipid metabolism. Its function is as follows. Catalyzes the reduction of the glycolytic intermediate dihydroxyacetone phosphate (DHAP) to sn-glycerol 3-phosphate (G3P), the key precursor for phospholipid synthesis. The polypeptide is Glycerol-3-phosphate dehydrogenase [NAD(P)+] (Leptospira borgpetersenii serovar Hardjo-bovis (strain L550)).